Reading from the N-terminus, the 134-residue chain is uncharacterized protein (134 aa).

Transmembrane regions (helical) follow at residues 49–69 (VAVP…SLDV) and 71–91 (LSMT…LNKV).

It localises to the cell membrane. This is an uncharacterized protein from Mycobacterium tuberculosis (strain ATCC 25618 / H37Rv).